The primary structure comprises 177 residues: 2''-aminoglycoside nucleotidyltransferase (177 aa).

3 residues coordinate Mg(2+): Asp-44, Asp-46, and Asp-86. Asp-86 (proton acceptor) is an active-site residue.

Mg(2+) is required as a cofactor.

The catalysed reaction is nucleoside triphosphate + gentamicin = diphosphate + 2''-nucleotidylgentamicin.. In terms of biological role, mediates bacterial resistance to kanamycin, gentamicin, dibekacin, sisomicin, neomycin and tobramycin by adenylating the 2''-hydroxyl group of these antibiotics. In Klebsiella pneumoniae, this protein is 2''-aminoglycoside nucleotidyltransferase (aadB).